Here is a 360-residue protein sequence, read N- to C-terminus: Alpha-2-macroglobulin receptor-associated protein (360 aa).

The signal sequence occupies residues 1-33; sequence MAPLRDRVSTLPRLQLLVLLLLPLLLVPQPIAG. A phosphoserine mark is found at S53 and S138. Residues 222 to 302 are a coiled coil; it reads SKHSELKDRL…KHNHYQKQLE (81 aa). An LDL receptor binding region spans residues 240–356; sequence RLRKVSHQGY…DLSSRVSRAR (117 aa). N-linked (GlcNAc...) asparagine glycosylation occurs at N271. The short motif at 357–360 is the Prevents secretion from ER element; sequence HNEL.

Belongs to the alpha-2-MRAP family. As to quaternary structure, interacts with the LRP1/alpha-2-macroglobulin receptor heavy and light chains; the interaction is transient and coincides with a reduction of ligand binding by the receptor. Interacts with LRP2/glycoprotein 330. Interacts with LRP1B; binding is followed by internalization and degradation. Interacts with LDLR. Interacts with SORL1. Interacts with LRP1; this interaction is followed by rapid internalization. In terms of processing, N-glycosylated.

The protein localises to the rough endoplasmic reticulum lumen. Its subcellular location is the endoplasmic reticulum-Golgi intermediate compartment lumen. It is found in the golgi apparatus. It localises to the cis-Golgi network. The protein resides in the golgi apparatus lumen. The protein localises to the endosome lumen. Its subcellular location is the cell surface. Functionally, molecular chaperone for LDL receptor-related proteins that may regulate their ligand binding activity along the secretory pathway. In Rattus norvegicus (Rat), this protein is Alpha-2-macroglobulin receptor-associated protein (Lrpap1).